A 167-amino-acid chain; its full sequence is Translationally-controlled tumor protein homolog (167 aa).

In terms of domain architecture, TCTP spans 1-167 (MLIYQDVLTG…WKDGLKEIKI (167 aa)).

It belongs to the TCTP family.

The protein localises to the cytoplasm. It localises to the cytoskeleton. Its function is as follows. Involved in protein synthesis. Involved in microtubule stabilization. The polypeptide is Translationally-controlled tumor protein homolog (Cryptococcus neoformans var. neoformans serotype D (strain B-3501A) (Filobasidiella neoformans)).